We begin with the raw amino-acid sequence, 303 residues long: Taste receptor type 2 member 13 (303 aa).

At 1–7 the chain is on the extracellular side; the sequence is MESALPS. A helical membrane pass occupies residues 8–28; sequence IFTLVIIAEFIIGNLSNGFIV. Residues 29–55 lie on the Cytoplasmic side of the membrane; sequence LINCIDWVSKRELSSVDKLLIILAISR. A helical membrane pass occupies residues 56 to 76; that stretch reads IGLIWEILVSWFLALHSLAIF. At 77-85 the chain is on the extracellular side; the sequence is VSGTGLRIM. A helical membrane pass occupies residues 86–106; sequence IFSWIVSNHFNLWLATILSIF. At 107–128 the chain is on the cytoplasmic side; that stretch reads YLLKIASFSSPAFLYLKRRVNK. The chain crosses the membrane as a helical span at residues 129–149; sequence VILMILLGTLVFLFLNLIQIN. Residues 150 to 184 lie on the Extracellular side of the membrane; that stretch reads MLIKDWLDRYERNTTWNFSMSDFETFSVSVRFTMT. N-linked (GlcNAc...) asparagine glycosylation is found at asparagine 162 and asparagine 166. Residues 185-205 form a helical membrane-spanning segment; that stretch reads MFSLTPFTVAFISFLLLVFSL. Residues 206–232 lie on the Cytoplasmic side of the membrane; that stretch reads QKHLQKMQLNYKGHRDPRTKVHTNALK. The helical transmembrane segment at 233 to 253 threads the bilayer; that stretch reads IVISFLLLYASFFLSILISWI. The Extracellular segment spans residues 254–261; the sequence is SELYQNTV. A helical transmembrane segment spans residues 262–282; sequence IYMLCETIGAFYPSSHSFLLI. Residues 283–303 lie on the Cytoplasmic side of the membrane; it reads LGNAKLRQAFLLVAAKVWAKR.

Belongs to the G-protein coupled receptor T2R family.

The protein localises to the membrane. Functionally, receptor that may play a role in the perception of bitterness and is gustducin-linked. May play a role in sensing the chemical composition of the gastrointestinal content. The activity of this receptor may stimulate alpha gustducin, mediate PLC-beta-2 activation and lead to the gating of TRPM5. This is Taste receptor type 2 member 13 (TAS2R13) from Pan troglodytes (Chimpanzee).